The chain runs to 179 residues: ATP-dependent protease subunit HslV (179 aa).

Threonine 6 is an active-site residue. Na(+) is bound by residues serine 164, cysteine 167, and threonine 170.

This sequence belongs to the peptidase T1B family. HslV subfamily. In terms of assembly, a double ring-shaped homohexamer of HslV is capped on each side by a ring-shaped HslU homohexamer. The assembly of the HslU/HslV complex is dependent on binding of ATP.

It is found in the cytoplasm. The catalysed reaction is ATP-dependent cleavage of peptide bonds with broad specificity.. With respect to regulation, allosterically activated by HslU binding. Protease subunit of a proteasome-like degradation complex believed to be a general protein degrading machinery. In Listeria monocytogenes serotype 4b (strain CLIP80459), this protein is ATP-dependent protease subunit HslV.